A 414-amino-acid chain; its full sequence is Serine/threonine transporter SstT (414 aa).

Transmembrane regions (helical) follow at residues 16 to 36 (GSLVKQILVGLVLGILLAWIS), 46 to 66 (LGTLFVGALKAVAPVLVLMLV), 84 to 104 (ILFLYLLGTFSAALAAVVFSF), 143 to 163 (ALLNANYIGILVWAVGLGFAL), 180 to 200 (AVTFMVKLVIRFAPVGIFGLV), 219 to 239 (LVVLIGCMLLVALMVNPLLVF), 300 to 320 (MAGAAITITVLTLAAVHTLGV), and 332 to 352 (VVASLCACGASGVAGGSLLLI).

Belongs to the dicarboxylate/amino acid:cation symporter (DAACS) (TC 2.A.23) family.

It localises to the cell inner membrane. It catalyses the reaction L-serine(in) + Na(+)(in) = L-serine(out) + Na(+)(out). It carries out the reaction L-threonine(in) + Na(+)(in) = L-threonine(out) + Na(+)(out). Involved in the import of serine and threonine into the cell, with the concomitant import of sodium (symport system). The sequence is that of Serine/threonine transporter SstT from Salmonella heidelberg (strain SL476).